A 424-amino-acid chain; its full sequence is Kynureninase (424 aa).

Pyridoxal 5'-phosphate is bound by residues Leu106, Thr107, 134–137, Asp219, His222, and Tyr244; that span reads FPSD. Lys245 bears the N6-(pyridoxal phosphate)lysine mark. Positions 274 and 302 each coordinate pyridoxal 5'-phosphate.

The protein belongs to the kynureninase family. As to quaternary structure, homodimer. Requires pyridoxal 5'-phosphate as cofactor.

It carries out the reaction L-kynurenine + H2O = anthranilate + L-alanine + H(+). The enzyme catalyses 3-hydroxy-L-kynurenine + H2O = 3-hydroxyanthranilate + L-alanine + H(+). Its pathway is amino-acid degradation; L-kynurenine degradation; L-alanine and anthranilate from L-kynurenine: step 1/1. The protein operates within cofactor biosynthesis; NAD(+) biosynthesis; quinolinate from L-kynurenine: step 2/3. Catalyzes the cleavage of L-kynurenine (L-Kyn) and L-3-hydroxykynurenine (L-3OHKyn) into anthranilic acid (AA) and 3-hydroxyanthranilic acid (3-OHAA), respectively. This Xanthomonas campestris pv. campestris (strain 8004) protein is Kynureninase.